The sequence spans 423 residues: Zinc finger protein Gfi-1 (423 aa).

The segment at 1-20 is SNAG domain; it reads MPRSFLVKSKKAHSYHQPRS. The disordered stretch occupies residues 1–102; that stretch reads MPRSFLVKSK…PPSPSVSPAS (102 aa). Residues Ser-20 and Ser-57 each carry the phosphoserine modification. Residues 48-57 are compositionally biased toward basic and acidic residues; that stretch reads SKMEPRERLS. The interval 141–258 is required for interaction with RELA; sequence RQCSALERSA…LLLGGGSYKC (118 aa). C2H2-type zinc fingers lie at residues 256 to 279, 285 to 307, 313 to 335, 341 to 363, 369 to 391, and 397 to 420; these read YKCIKCSKVFSTPHGLEVHVRRSH, FACEMCGKTFGHAVSLEQHKAVH, FDCKICGKSFKRSSTLSTHLLIH, YPCQYCGKRFHQKSDMKKHTFIH, HKCQVCGKAFSQSSNLITHSRKH, and FGCDLCGKGFQRKVDLRRHRETQH.

As to quaternary structure, interacts with U2AF1L4. Component of RCOR-GFI-KDM1A-HDAC complexes. Interacts directly with RCOR1, KDM1A and HDAC2. Also interacts with HDAC1. regions. Interacts (via the zinc-finger domain) with ARIH2; the interaction prevents GFI1 ubiquitination and proteasomal degradation. Interacts with PIAS3; the interaction relieves the inhibitory effect of PIAS3 on STAT3-mediated transcriptional activity. Forms a complex with EHMT2 and HDAC1 to promote 'Lys-9' dimethylation of H3 (H3K9Me2) and repress expression of target genes. Interacts directly with EHMT2. Component of the GFI1-AJUBA-HDAC1 repressor complex. Interacts directly with AJUBA (via ITS LIM domains); the interaction results in the HDAC-dependent corepression of a subset of GFI1 target genes and, occurs independent of the SNAG domain. Interacts with SPI1; the interaction inhibits SPI1 transcriptional activity targeted at macrophage-specific genes, repressing macrophage differentiation of myeloid progenitor cells and promoting granulocyte commitment. Interacts with RUNX1T1; the interaction represses HDAC-mediated transcriptional activity. Interacts with RELA; the interaction occurs on liposaccharide (LPS) stimulation controls RELA DNA binding activity and regulates endotoxin-mediated TOLL-like receptor inflammatory response. Interacts (via the C-terminal zinc fingers) with ZBTB17; the interaction results in the recruitment of GFI1 to the CDKN1A/p21 promoter and repression of CDKN1A/p21 transcription. Ubiquitinated. As to expression, restricted to lymphoid tissues and testes in adult animals.

It localises to the nucleus. Transcription repressor essential for hematopoiesis. Functions in a cell-context and development-specific manner. Binds to 5'-TAAATCAC[AT]GCA-3' in the promoter region of a large number of genes. Component of several complexes, including the EHMT2-GFI1-HDAC1, AJUBA-GFI1-HDAC1 and RCOR-GFI-KDM1A-HDAC complexes, that suppress, via histone deacetylase (HDAC) recruitment, a number of genes implicated in multilineage blood cell development. Regulates neutrophil differentiation, promotes proliferation of lymphoid cells, and is required for granulocyte development. Inhibits SPI1 transcriptional activity at macrophage-specific genes, repressing macrophage differentiation of myeloid progenitor cells and promoting granulocyte commitment. Mediates, together with U2AF1L4, the alternative splicing of CD45 and controls T-cell receptor signaling. Regulates the endotoxin-mediated Toll-like receptor (TLR) inflammatory response by antagonizing RELA. Cooperates with CBFA2T2 to regulate ITGB1-dependent neurite growth. Controls cell-cycle progression by repressing CDKNIA/p21 transcription in response to TGFB1 via recruitment of GFI1 by ZBTB17 to the CDKNIA/p21 and CDKNIB promoters. Required for the maintenance of inner ear hair cells. In addition to its role in transcription, acts as a substrate adapter for PRMT1 in the DNA damage response: facilitates the recognition of TP53BP1 and MRE11 substrates by PRMT1, promoting their methylation and the DNA damage response. The chain is Zinc finger protein Gfi-1 (Gfi1) from Rattus norvegicus (Rat).